The following is a 464-amino-acid chain: ATP synthase subunit beta (464 aa).

Residue 148 to 155 (GGAGVGKT) coordinates ATP.

Belongs to the ATPase alpha/beta chains family. F-type ATPases have 2 components, CF(1) - the catalytic core - and CF(0) - the membrane proton channel. CF(1) has five subunits: alpha(3), beta(3), gamma(1), delta(1), epsilon(1). CF(0) has three main subunits: a(1), b(2) and c(9-12). The alpha and beta chains form an alternating ring which encloses part of the gamma chain. CF(1) is attached to CF(0) by a central stalk formed by the gamma and epsilon chains, while a peripheral stalk is formed by the delta and b chains.

It is found in the cell inner membrane. It carries out the reaction ATP + H2O + 4 H(+)(in) = ADP + phosphate + 5 H(+)(out). Produces ATP from ADP in the presence of a proton gradient across the membrane. The catalytic sites are hosted primarily by the beta subunits. In Acinetobacter baylyi (strain ATCC 33305 / BD413 / ADP1), this protein is ATP synthase subunit beta.